The sequence spans 360 residues: Peptide chain release factor 1 (360 aa).

Q235 is modified (N5-methylglutamine).

The protein belongs to the prokaryotic/mitochondrial release factor family. In terms of processing, methylated by PrmC. Methylation increases the termination efficiency of RF1.

The protein localises to the cytoplasm. In terms of biological role, peptide chain release factor 1 directs the termination of translation in response to the peptide chain termination codons UAG and UAA. This chain is Peptide chain release factor 1, found in Bordetella pertussis (strain Tohama I / ATCC BAA-589 / NCTC 13251).